The primary structure comprises 219 residues: Leukocyte surface antigen CD53 (219 aa).

Residues 1–11 are Cytoplasmic-facing; that stretch reads MGMSSLKLLKY. Residues 12–32 traverse the membrane as a helical segment; it reads VLFFFNLLFWICGCCILGFGI. The Extracellular portion of the chain corresponds to 33–54; sequence YLLIHNNFGVLFHNLPSLTLGN. Residues 55-69 form a helical membrane-spanning segment; it reads VFVIVGSIIMVVAFL. The Cytoplasmic segment spans residues 70–80; the sequence is GCMGSIKENKC. The helical transmembrane segment at 81-106 threads the bilayer; sequence LLMSFFILLLIILLAEVTLAILLFVY. Residues 107–181 lie on the Extracellular side of the membrane; that stretch reads EQKLNEYVAK…AKARLWFHSN (75 aa). N-linked (GlcNAc...) asparagine glycans are attached at residues Asn129 and Asn148. The chain crosses the membrane as a helical span at residues 182–206; it reads FLYIGIITICVCVIEVLGMSFALTL. The Cytoplasmic segment spans residues 207–219; sequence NCQIDKTSQTIGL.

It belongs to the tetraspanin (TM4SF) family. Interacts with SCIMP. Interacts with CD45/PTPRC. Interacts with IL7R. Interacts with RBL2 and PPP2CA. As to expression, B-cells, monocytes, macrophages, neutrophils, single (CD4 or CD8) positive thymocytes and peripheral T-cells.

It is found in the cell membrane. It localises to the cell junction. Its subcellular location is the membrane. The protein resides in the synapse. Structural component of specialized membrane microdomains known as tetraspanin-enriched microdomains (TERMs), which act as platforms for receptor clustering and signaling. Participates thereby in diverse biological functions such as cell signal transduction, adhesion, migration and protein trafficking. Plays a role in the activation of monocytes and B-cells. Acts as an essential regulator of B-cell development by promoting interleukin-7 receptor/IL7R signaling. Also promotes, in B-cells, the BCR signaling by recruiting PKC to the plasma membrane in order to phosphorylate its substrates. Plays an essential role in B- and T-cells homing to lymph nodes by stabilizing L-selectin/SELL cell surface expression. Also mediates metabolic and inflammatory functions in hepatocytes and adipose tissue by promoting TNF-alpha and LPS signaling independent of the immune compartment. This is Leukocyte surface antigen CD53 (CD53) from Homo sapiens (Human).